Consider the following 367-residue polypeptide: tRNA 2-selenouridine synthase (367 aa).

In terms of domain architecture, Rhodanese spans 14–137; sequence FLNDVPLMDV…LRRFLIDSLE (124 aa). Cys97 functions as the S-selanylcysteine intermediate in the catalytic mechanism.

This sequence belongs to the SelU family. In terms of assembly, monomer.

The catalysed reaction is 5-methylaminomethyl-2-thiouridine(34) in tRNA + selenophosphate + (2E)-geranyl diphosphate + H2O + H(+) = 5-methylaminomethyl-2-selenouridine(34) in tRNA + (2E)-thiogeraniol + phosphate + diphosphate. It carries out the reaction 5-methylaminomethyl-2-thiouridine(34) in tRNA + (2E)-geranyl diphosphate = 5-methylaminomethyl-S-(2E)-geranyl-thiouridine(34) in tRNA + diphosphate. It catalyses the reaction 5-methylaminomethyl-S-(2E)-geranyl-thiouridine(34) in tRNA + selenophosphate + H(+) = 5-methylaminomethyl-2-(Se-phospho)selenouridine(34) in tRNA + (2E)-thiogeraniol. The enzyme catalyses 5-methylaminomethyl-2-(Se-phospho)selenouridine(34) in tRNA + H2O = 5-methylaminomethyl-2-selenouridine(34) in tRNA + phosphate. Functionally, involved in the post-transcriptional modification of the uridine at the wobble position (U34) of tRNA(Lys), tRNA(Glu) and tRNA(Gln). Catalyzes the conversion of 2-thiouridine (S2U-RNA) to 2-selenouridine (Se2U-RNA). Acts in a two-step process involving geranylation of 2-thiouridine (S2U) to S-geranyl-2-thiouridine (geS2U) and subsequent selenation of the latter derivative to 2-selenouridine (Se2U) in the tRNA chain. The sequence is that of tRNA 2-selenouridine synthase from Marinobacter nauticus (strain ATCC 700491 / DSM 11845 / VT8) (Marinobacter aquaeolei).